The primary structure comprises 32 residues: Calcitonin-2 (32 aa).

Cysteines 1 and 7 form a disulfide. Pro-32 carries the post-translational modification Proline amide.

This sequence belongs to the calcitonin family.

The protein localises to the secreted. Its function is as follows. Causes a rapid but short-lived drop in the level of calcium and phosphate in blood by promoting the incorporation of those ions in the bones. This Oncorhynchus gorbuscha (Pink salmon) protein is Calcitonin-2.